A 202-amino-acid chain; its full sequence is Large ribosomal subunit protein bL17 (202 aa).

The tract at residues 148-202 is disordered; sequence DEAPAAESTDAAQVEAGGVEQPDTLPDADAPATADEGVEVDAAEVDPSDEKKDQA. Residues 169–182 are compositionally biased toward low complexity; that stretch reads PDTLPDADAPATAD. Residues 183-194 show a composition bias toward acidic residues; sequence EGVEVDAAEVDP.

It belongs to the bacterial ribosomal protein bL17 family. Part of the 50S ribosomal subunit. Contacts protein L32.

This chain is Large ribosomal subunit protein bL17, found in Kineococcus radiotolerans (strain ATCC BAA-149 / DSM 14245 / SRS30216).